The sequence spans 67 residues: UPF0434 protein Reut_A0592 (67 aa).

It belongs to the UPF0434 family.

This chain is UPF0434 protein Reut_A0592, found in Cupriavidus pinatubonensis (strain JMP 134 / LMG 1197) (Cupriavidus necator (strain JMP 134)).